The sequence spans 75 residues: UPF0057 membrane protein At2g24040 (75 aa).

The next 2 helical transmembrane spans lie at 4-24 and 33-53; these read SCELCCEIFIAILLPPVGVCL and FFICLILTCLGYLPGIIYAIY.

The protein belongs to the UPF0057 (PMP3) family.

The protein localises to the membrane. The polypeptide is UPF0057 membrane protein At2g24040 (Arabidopsis thaliana (Mouse-ear cress)).